Consider the following 83-residue polypeptide: Type 3 secretion system needle filament protein (83 aa).

Belongs to the SctF family. The core secretion machinery of the T3SS is composed of approximately 20 different proteins, including cytoplasmic components, a base, an export apparatus and a needle. This subunit polymerizes and forms the helical needle filament. Interacts with the needle tip protein IpaD/SctA. Interacts with the export apparatus components SpaP/SctR, SpaQ/SctS and SpaR/SctT.

The protein localises to the secreted. It is found in the cell surface. In terms of biological role, component of the type III secretion system (T3SS), also called injectisome, which is used to inject bacterial effector proteins into eukaryotic host cells. MxiH/SctF forms the external needle filament that protrudes from the bacterial surface. During infection, can induce innate immune responses. The needle proteins interact with host TLR2 or TLR4, and induce signaling by NF-kappa-B and/or AP-1. This activation is MyD88 dependent and results in increased expression of cytokines, including TNF-alpha, IL-6 and IL-8. The polypeptide is Type 3 secretion system needle filament protein (Shigella flexneri).